A 110-amino-acid polypeptide reads, in one-letter code: Large ribosomal subunit protein uL22 (110 aa).

Belongs to the universal ribosomal protein uL22 family. As to quaternary structure, part of the 50S ribosomal subunit.

This protein binds specifically to 23S rRNA; its binding is stimulated by other ribosomal proteins, e.g. L4, L17, and L20. It is important during the early stages of 50S assembly. It makes multiple contacts with different domains of the 23S rRNA in the assembled 50S subunit and ribosome. In terms of biological role, the globular domain of the protein is located near the polypeptide exit tunnel on the outside of the subunit, while an extended beta-hairpin is found that lines the wall of the exit tunnel in the center of the 70S ribosome. This is Large ribosomal subunit protein uL22 from Marinomonas sp. (strain MWYL1).